Reading from the N-terminus, the 584-residue chain is Lamin-B1 (584 aa).

Residues 1 to 22 (MAAAVAPLSPQPRGAAASAALS) are disordered. The segment at 2–33 (AAAVAPLSPQPRGAAASAALSPTRISRLQEKE) is head. Ser22 carries the post-translational modification Phosphoserine. Positions 31–387 (EKEELRQLND…KLLESEEERL (357 aa)) constitute an IF rod domain. Residues 34–70 (ELRQLNDRLAVYIDKVRSLETENSALQRRVSEREQVC) form a coil 1A region. Residues 81-218 (FETELADARK…NVYEEEIKET (138 aa)) are coil 1B. The tract at residues 243 to 385 (QALKEIREQH…YRKLLESEEE (143 aa)) is coil 2. Residues 386–584 (RLRLSPGPSS…RKPERSCVVM (199 aa)) are tail. Disordered stretches follow at residues 388–431 (RLSP…SVSI) and 548–584 (TVNE…CVVM). The segment covering 394–408 (SSRVTVSRASSSRSV) has biased composition (low complexity). The Nuclear localization signal signature appears at 414-419 (KRKRID). The LTD domain maps to 429 to 545 (VSISHSASAT…EEVAQRSTVF (117 aa)). The segment covering 551–565 (EGEEEEEEGEEEILE) has biased composition (acidic residues). The segment covering 575 to 584 (RKPERSCVVM) has biased composition (basic and acidic residues). Cys581 is subject to Cysteine methyl ester. Cys581 is lipidated: S-farnesyl cysteine. A propeptide spans 582–584 (VVM) (removed in mature form).

It belongs to the intermediate filament family. Homodimer. Lamin dimers then assemble into dimeric head-to-tail polymers. Ultimately, two head-to-tail polymers assemble laterally into a protofilament with a uniformly shaped rod of 3.5 nm in diameter. Post-translationally, phosphorylation plays a key role in lamin organization, subcellular localization and nuclear envelope disintegration. Phosphorylation by CDK1 at Ser-22 at the onset of mitosis drives lamin disassembly and nuclear envelope breakdown.

It is found in the nucleus lamina. The protein localises to the nucleus envelope. The protein resides in the nucleus. Its subcellular location is the nucleoplasm. It localises to the nucleus matrix. Functionally, lamins are intermediate filament proteins that assemble into a filamentous meshwork, and which constitute the major components of the nuclear lamina, a fibrous layer on the nucleoplasmic side of the inner nuclear membrane. Lamins provide a framework for the nuclear envelope, bridging the nuclear envelope and chromatin. Plays an important role in nuclear assembly, chromatin organization, nuclear membrane and telomere dynamics. This Gallus gallus (Chicken) protein is Lamin-B1 (LMNB1).